The following is a 198-amino-acid chain: MKKFARFIGIDDGYFVRNVHKKTKLIGAITKHTILDGVLSREITIDGDDVSEKIIDMIKNSNHYYQIRGIILYGITFAGFNIADVELIYKNLGLPIIIVMERPPKDIFYKAIEKYKPNGIELIKKAGPIYKTKTPFGYTYYQVYGIDKDTASNIINNLAIVSKIPEPARVAHMIARGVTKGDSSKPRAGGDSNPGPAG.

A disordered region spans residues 179–198 (TKGDSSKPRAGGDSNPGPAG).

The protein belongs to the UPF0215 family.

This is UPF0215 protein NEQ431 from Nanoarchaeum equitans (strain Kin4-M).